A 124-amino-acid polypeptide reads, in one-letter code: MIKIDIPAPNVTITERQQSANDNEPKIKPIHGFIDFHQIPRDKGGIFMFYNIHDELLFVGKARKLRQRIKKHFEDTVSPIKHHRDEVYKIEVCVVDDPMEREIYETYIINTQHSKYNIDKVFFK.

The GIY-YIG domain maps to 42-118; it reads DKGGIFMFYN…INTQHSKYNI (77 aa).

This is an uncharacterized protein from Bacillus subtilis (strain 168).